The primary structure comprises 425 residues: Serine--tRNA ligase 2 (425 aa).

230–232 lines the L-serine pocket; the sequence is TAE. 261-263 is a binding site for ATP; that stretch reads REE. Position 284 (glutamate 284) interacts with L-serine. 348–351 contributes to the ATP binding site; that stretch reads EISS. Residue serine 383 coordinates L-serine.

It belongs to the class-II aminoacyl-tRNA synthetase family. Type-1 seryl-tRNA synthetase subfamily. Homodimer. The tRNA molecule binds across the dimer.

Its subcellular location is the cytoplasm. The enzyme catalyses tRNA(Ser) + L-serine + ATP = L-seryl-tRNA(Ser) + AMP + diphosphate + H(+). It catalyses the reaction tRNA(Sec) + L-serine + ATP = L-seryl-tRNA(Sec) + AMP + diphosphate + H(+). It functions in the pathway aminoacyl-tRNA biosynthesis; selenocysteinyl-tRNA(Sec) biosynthesis; L-seryl-tRNA(Sec) from L-serine and tRNA(Sec): step 1/1. In terms of biological role, catalyzes the attachment of serine to tRNA(Ser). Is also able to aminoacylate tRNA(Sec) with serine, to form the misacylated tRNA L-seryl-tRNA(Sec), which will be further converted into selenocysteinyl-tRNA(Sec). The protein is Serine--tRNA ligase 2 of Lactiplantibacillus plantarum (strain ATCC BAA-793 / NCIMB 8826 / WCFS1) (Lactobacillus plantarum).